Consider the following 466-residue polypeptide: Gamma-glutamylpolyamine synthetase GlnA3 (466 aa).

Residues 127–466 form the GS catalytic domain; that stretch reads GRTVLRRIVA…GVAAAYRWKY (340 aa). Mg(2+) contacts are provided by Glu-151 and Glu-153. Residue Glu-202 coordinates ATP. Mg(2+) is bound by residues Glu-207 and Glu-214. An L-glutamate-binding site is contributed by Gly-259. Residue His-263 coordinates Mg(2+). Ser-267 serves as a coordination point for ATP. Positions 316 and 334 each coordinate L-glutamate. ATP-binding residues include Arg-334 and Arg-339. A Mg(2+)-binding site is contributed by Glu-355.

The protein belongs to the glutamine synthetase family. It depends on Mg(2+) as a cofactor. Expressed in mycelium.

The catalysed reaction is spermine + L-glutamate + ATP = gamma-L-glutamylspermine + ADP + phosphate + H(+). It carries out the reaction spermidine + L-glutamate + ATP = gamma-L-glutamylspermidine + ADP + phosphate + H(+). It catalyses the reaction putrescine + L-glutamate + ATP = gamma-L-glutamylputrescine + ADP + phosphate + H(+). The enzyme catalyses cadaverine + L-glutamate + ATP = gamma-L-glutamylcadaverine + ADP + phosphate + H(+). The protein operates within amine and polyamine degradation; putrescine degradation. Its pathway is amine and polyamine degradation; spermidine degradation. It participates in amine and polyamine degradation; spermine degradation. Its function is as follows. Involved in the catabolism of polyamines. Catalyzes the ATP-dependent gamma-glutamylation of polyamines. Substrates include putrescine, cadaverine, spermidine and spermine, with a preference for long-chain polyamines spermidine and spermine. Is not able to compensate for the loss of glutamine synthetases (GSs). No complementation of the L-glutamine auxotrophy of an E.coli glnA mutant. Involved in morphological differentiation and in the production of secondary metabolites. Together with GlnA2, enables survival of S.coelicolor under exposure to high local environmental polyamine concentrations, which is toxic to the cells. This chain is Gamma-glutamylpolyamine synthetase GlnA3, found in Streptomyces coelicolor (strain ATCC BAA-471 / A3(2) / M145).